A 261-amino-acid polypeptide reads, in one-letter code: UPF0328 protein ECU02_0020/ECU04_1700 (261 aa).

The interval Met1–Ile20 is disordered. Residues Glu11–Ile20 are compositionally biased toward basic and acidic residues.

The protein belongs to the UPF0328 family.

This chain is UPF0328 protein ECU02_0020/ECU04_1700, found in Encephalitozoon cuniculi (strain GB-M1) (Microsporidian parasite).